We begin with the raw amino-acid sequence, 412 residues long: Class E basic helix-loop-helix protein 40 (412 aa).

The tract at residues 1-21 (MERIPSAQPPPTCLPKAPGLE) is disordered. The interval 1–139 (MERIPSAQPP…LSGRNVEAGQ (139 aa)) is essential for interaction with BMAL1, E-box binding and repressor activity against the CLOCK-BMAL1 heterodimer. The bHLH domain occupies 52–107 (TYKLPHRLIEKKRRDRINECIAQLKDLLPEHLKLTTLGHLEKAVVLELTLKHVKAL). The segment at 75–79 (LKDLL) is necessary for interaction with RXRA and repressor activity against RXRA. An Orange domain is found at 142-175 (FCSGFQTCAREVLQYLAKHENTRDLKSSQLVTHL). Lys-159 is covalently cross-linked (Glycyl lysine isopeptide (Lys-Gly) (interchain with G-Cter in SUMO1, SUMO2 and SUMO3)). A Glycyl lysine isopeptide (Lys-Gly) (interchain with G-Cter in SUMO2) cross-link involves residue Lys-167. 2 disordered regions span residues 182-256 (LLQG…ELRV) and 279-298 (KQES…SDDE). The residue at position 235 (Ser-235) is a Phosphoserine. Lys-279 participates in a covalent cross-link: Glycyl lysine isopeptide (Lys-Gly) (interchain with G-Cter in SUMO1); alternate. Lys-279 participates in a covalent cross-link: Glycyl lysine isopeptide (Lys-Gly) (interchain with G-Cter in SUMO1, SUMO2 and SUMO3); alternate. A Glycyl lysine isopeptide (Lys-Gly) (interchain with G-Cter in SUMO2); alternate cross-link involves residue Lys-279. Lys-288 participates in a covalent cross-link: Glycyl lysine isopeptide (Lys-Gly) (interchain with G-Cter in SUMO2). Position 383 is a phosphoserine (Ser-383).

In terms of assembly, homodimer. Heterodimer with BHLHE41/DEC2. Interacts with TCF3/E47. Interacts with ubiquitin-conjugating enzyme UBE2I/UBC9. Interacts with HDAC1, SUMO1, RXRA and BMAL1. In terms of processing, ubiquitinated; which may lead to proteasomal degradation. Post-translationally, sumoylation inhibits its ubiquitination and promotes its negative regulation of the CLOCK-BMAL1 heterodimer transcriptional activator activity.

It is found in the cytoplasm. The protein localises to the nucleus. In terms of biological role, transcriptional repressor involved in the regulation of the circadian rhythm by negatively regulating the activity of the clock genes and clock-controlled genes. Acts as the negative limb of a novel autoregulatory feedback loop (DEC loop) which differs from the one formed by the PER and CRY transcriptional repressors (PER/CRY loop). Both these loops are interlocked as it represses the expression of PER1/2 and in turn is repressed by PER1/2 and CRY1/2. Represses the activity of the circadian transcriptional activator: CLOCK-BMAL1|BMAL2 heterodimer by competing for the binding to E-box elements (5'-CACGTG-3') found within the promoters of its target genes. Negatively regulates its own expression and the expression of DBP and BHLHE41/DEC2. Acts as a corepressor of RXR and the RXR-LXR heterodimers and represses the ligand-induced RXRA and NR1H3/LXRA transactivation activity. May be involved in the regulation of chondrocyte differentiation via the cAMP pathway. Represses the transcription of NR0B2 and attentuates the transactivation of NR0B2 by the CLOCK-BMAL1 complex. Drives the circadian rhythm of blood pressure through transcriptional repression of ATP1B1 in the cardiovascular system. This Bos taurus (Bovine) protein is Class E basic helix-loop-helix protein 40 (BHLHE40).